The following is a 627-amino-acid chain: 1-deoxy-D-xylulose-5-phosphate synthase (627 aa).

Residues His-80 and 121-123 (GHS) contribute to the thiamine diphosphate site. Residue Asp-152 coordinates Mg(2+). Thiamine diphosphate contacts are provided by residues 153–154 (GA), Asn-181, Tyr-288, and Glu-370. Asn-181 provides a ligand contact to Mg(2+).

It belongs to the transketolase family. DXPS subfamily. Homodimer. It depends on Mg(2+) as a cofactor. Requires thiamine diphosphate as cofactor.

The catalysed reaction is D-glyceraldehyde 3-phosphate + pyruvate + H(+) = 1-deoxy-D-xylulose 5-phosphate + CO2. It functions in the pathway metabolic intermediate biosynthesis; 1-deoxy-D-xylulose 5-phosphate biosynthesis; 1-deoxy-D-xylulose 5-phosphate from D-glyceraldehyde 3-phosphate and pyruvate: step 1/1. Catalyzes the acyloin condensation reaction between C atoms 2 and 3 of pyruvate and glyceraldehyde 3-phosphate to yield 1-deoxy-D-xylulose-5-phosphate (DXP). The protein is 1-deoxy-D-xylulose-5-phosphate synthase of Aliivibrio salmonicida (strain LFI1238) (Vibrio salmonicida (strain LFI1238)).